A 200-amino-acid polypeptide reads, in one-letter code: Protein GrpE (200 aa).

It belongs to the GrpE family. Homodimer.

The protein localises to the cytoplasm. Functionally, participates actively in the response to hyperosmotic and heat shock by preventing the aggregation of stress-denatured proteins, in association with DnaK and GrpE. It is the nucleotide exchange factor for DnaK and may function as a thermosensor. Unfolded proteins bind initially to DnaJ; upon interaction with the DnaJ-bound protein, DnaK hydrolyzes its bound ATP, resulting in the formation of a stable complex. GrpE releases ADP from DnaK; ATP binding to DnaK triggers the release of the substrate protein, thus completing the reaction cycle. Several rounds of ATP-dependent interactions between DnaJ, DnaK and GrpE are required for fully efficient folding. This is Protein GrpE from Shewanella piezotolerans (strain WP3 / JCM 13877).